A 572-amino-acid chain; its full sequence is Pentatricopeptide repeat-containing protein At5g15010, mitochondrial (572 aa).

The N-terminal 57 residues, 1 to 57, are a transit peptide targeting the mitochondrion; the sequence is MRGIFLIRSRLSIFRAPAVKCLRFSNVLPSLSNNCIVRLYMEPPVACVLPLGLCSMF. 10 PPR repeats span residues 160–194, 196–230, 231–261, 265–300, 301–335, 336–371, 372–406, 412–438, 439–473, and 474–508; these read SVRE…SPSL, NSQT…KLEM, GIDD…NKDK, DAKS…GVKH, DVVS…CIEP, DRKV…GIEP, NVVT…GLFP, HAFM…GCEP, TVET…TVGP, and DLSS…GMRP.

The protein belongs to the PPR family. P subfamily.

It is found in the mitochondrion. The protein is Pentatricopeptide repeat-containing protein At5g15010, mitochondrial of Arabidopsis thaliana (Mouse-ear cress).